A 108-amino-acid chain; its full sequence is UPF0145 protein Tmel_1129 (108 aa).

Belongs to the UPF0145 family.

In Thermosipho melanesiensis (strain DSM 12029 / CIP 104789 / BI429), this protein is UPF0145 protein Tmel_1129.